A 159-amino-acid polypeptide reads, in one-letter code: Superoxide dismutase [Cu-Zn] (159 aa).

Cu cation is bound by residues histidine 47, histidine 49, and histidine 64. A disulfide bridge connects residues cysteine 58 and cysteine 150. 4 residues coordinate Zn(2+): histidine 64, histidine 72, histidine 81, and aspartate 84. Histidine 121 lines the Cu cation pocket.

It belongs to the Cu-Zn superoxide dismutase family. Cu cation is required as a cofactor. Zn(2+) serves as cofactor.

Its subcellular location is the cytoplasm. It carries out the reaction 2 superoxide + 2 H(+) = H2O2 + O2. In terms of biological role, destroys radicals which are normally produced within the cells and which are toxic to biological systems. This Haemonchus contortus (Barber pole worm) protein is Superoxide dismutase [Cu-Zn] (SOD).